Here is a 37-residue protein sequence, read N- to C-terminus: Large ribosomal subunit protein bL36c (37 aa).

This sequence belongs to the bacterial ribosomal protein bL36 family.

It localises to the plastid. It is found in the chloroplast. This is Large ribosomal subunit protein bL36c from Gnetum parvifolium (Small-leaved jointfir).